The primary structure comprises 244 residues: ATP synthase subunit a (244 aa).

7 helical membrane passes run 17-37 (LSNVLMITIASIIVLLIAVLT), 74-94 (PFLALGVTLLMYIFVSNMLGL), 112-132 (DPAITMTLAVMVMGLTHYYGV), 148-168 (IPLLVPLKIIEEFANTLTLGL), 171-191 (YGNIFAGEILLGLLAGLATNF), 196-216 (IALGIIGTLGAIVPMIVWQAF), and 217-237 (SLFVGTIQAFIFTMLTMVYIS).

It belongs to the ATPase A chain family. F-type ATPases have 2 components, CF(1) - the catalytic core - and CF(0) - the membrane proton channel. CF(1) has five subunits: alpha(3), beta(3), gamma(1), delta(1), epsilon(1). CF(0) has three main subunits: a(1), b(2) and c(9-12). The alpha and beta chains form an alternating ring which encloses part of the gamma chain. CF(1) is attached to CF(0) by a central stalk formed by the gamma and epsilon chains, while a peripheral stalk is formed by the delta and b chains.

It localises to the cell membrane. Its function is as follows. Key component of the proton channel; it plays a direct role in the translocation of protons across the membrane. This chain is ATP synthase subunit a, found in Bacillus pumilus (strain SAFR-032).